The sequence spans 146 residues: Large ribosomal subunit protein uL15 (146 aa).

The interval M1–R46 is disordered. The segment covering K9–G19 has biased composition (basic residues). Residues R20 to S30 show a composition bias toward gly residues.

Belongs to the universal ribosomal protein uL15 family. In terms of assembly, part of the 50S ribosomal subunit.

In terms of biological role, binds to the 23S rRNA. This Phytoplasma mali (strain AT) protein is Large ribosomal subunit protein uL15.